An 834-amino-acid polypeptide reads, in one-letter code: DNA gyrase subunit A (834 aa).

In terms of domain architecture, Topo IIA-type catalytic spans 34 to 500; that stretch reads LPDIRDGLKP…ADDIRDIEDI (467 aa). Tyr-122 serves as the catalytic O-(5'-phospho-DNA)-tyrosine intermediate. The GyrA-box signature appears at 527–533; the sequence is QRRGGHG. The tract at residues 810–834 is disordered; sequence LSSNENDDEVLSGSEEECSDTVSLR. A compositionally biased stretch (acidic residues) spans 814–828; that stretch reads ENDDEVLSGSEEECS.

It belongs to the type II topoisomerase GyrA/ParC subunit family. As to quaternary structure, heterotetramer, composed of two GyrA and two GyrB chains. In the heterotetramer, GyrA contains the active site tyrosine that forms a transient covalent intermediate with DNA, while GyrB binds cofactors and catalyzes ATP hydrolysis.

It localises to the cytoplasm. It catalyses the reaction ATP-dependent breakage, passage and rejoining of double-stranded DNA.. In terms of biological role, a type II topoisomerase that negatively supercoils closed circular double-stranded (ds) DNA in an ATP-dependent manner to modulate DNA topology and maintain chromosomes in an underwound state. Negative supercoiling favors strand separation, and DNA replication, transcription, recombination and repair, all of which involve strand separation. Also able to catalyze the interconversion of other topological isomers of dsDNA rings, including catenanes and knotted rings. Type II topoisomerases break and join 2 DNA strands simultaneously in an ATP-dependent manner. The polypeptide is DNA gyrase subunit A (Chlamydia pneumoniae (Chlamydophila pneumoniae)).